The sequence spans 606 residues: Threonine--tRNA ligase (606 aa).

Residues 212 to 503 form a catalytic region; it reads DHRKLGVEMK…LIEHTAGELP (292 aa). Cysteine 304, histidine 355, and histidine 480 together coordinate Zn(2+).

This sequence belongs to the class-II aminoacyl-tRNA synthetase family. Homodimer. Zn(2+) serves as cofactor.

It localises to the cytoplasm. It carries out the reaction tRNA(Thr) + L-threonine + ATP = L-threonyl-tRNA(Thr) + AMP + diphosphate + H(+). Catalyzes the attachment of threonine to tRNA(Thr) in a two-step reaction: L-threonine is first activated by ATP to form Thr-AMP and then transferred to the acceptor end of tRNA(Thr). Also edits incorrectly charged L-seryl-tRNA(Thr). The polypeptide is Threonine--tRNA ligase (Campylobacter curvus (strain 525.92)).